We begin with the raw amino-acid sequence, 246 residues long: 5'-nucleotidase SurE (246 aa).

Positions 8, 9, 39, and 91 each coordinate a divalent metal cation.

It belongs to the SurE nucleotidase family. A divalent metal cation is required as a cofactor.

The protein resides in the cytoplasm. The enzyme catalyses a ribonucleoside 5'-phosphate + H2O = a ribonucleoside + phosphate. Its function is as follows. Nucleotidase that shows phosphatase activity on nucleoside 5'-monophosphates. The sequence is that of 5'-nucleotidase SurE from Dechloromonas aromatica (strain RCB).